The sequence spans 86 residues: Weak neurotoxin 6 (86 aa).

The N-terminal stretch at 1–21 (MKTLLLTLVVVTIVCLDLGYT) is a signal peptide. 5 disulfides stabilise this stretch: Cys-24/Cys-45, Cys-27/Cys-32, Cys-38/Cys-63, Cys-67/Cys-78, and Cys-79/Cys-84.

This sequence belongs to the three-finger toxin family. Ancestral subfamily. Orphan group II sub-subfamily. In terms of tissue distribution, expressed by the venom gland.

It localises to the secreted. Functionally, binds with low affinity to muscular (alpha-1-beta-1-delta-epsilon/CHRNA1-CHRNB1-CHRND-CHRNE) and very low affinity to neuronal (alpha-7/CHRNA7) nicotinic acetylcholine receptor (nAChR). In Naja sputatrix (Malayan spitting cobra), this protein is Weak neurotoxin 6.